The chain runs to 482 residues: Altronate oxidoreductase (482 aa).

Position 18-29 (18-29 (IIQFGEGNFLRA)) interacts with NAD(+).

This sequence belongs to the mannitol dehydrogenase family. UxaB subfamily.

It carries out the reaction D-altronate + NAD(+) = keto-D-tagaturonate + NADH + H(+). Its pathway is carbohydrate metabolism; pentose and glucuronate interconversion. The sequence is that of Altronate oxidoreductase from Shigella sonnei (strain Ss046).